The sequence spans 632 residues: Chaperone protein HtpG (632 aa).

The segment at 1–339 is a; substrate-binding; that stretch reads MAHETMSFQA…SADLPLNVSR (339 aa). Residues 340 to 559 are b; sequence EILQESRDVK…DNDMSGYLQR (220 aa). Positions 560-632 are c; the sequence is MLKAAGQNAP…TNALLLSRAA (73 aa).

The protein belongs to the heat shock protein 90 family. Homodimer.

The protein resides in the cytoplasm. Its function is as follows. Molecular chaperone. Has ATPase activity. In Burkholderia cenocepacia (strain HI2424), this protein is Chaperone protein HtpG.